Consider the following 216-residue polypeptide: uncharacterized protein (216 aa).

The interval 55-216 is disordered; that stretch reads NEDKAEAMSN…NEKEKDVNPK (162 aa). 3 stretches are compositionally biased toward basic and acidic residues: residues 134-152, 177-187, and 207-216; these read LTEK…DNHV, KINDKSDDTLH, and NEKEKDVNPK.

This is an uncharacterized protein from Caenorhabditis elegans.